Reading from the N-terminus, the 155-residue chain is uncharacterized protein (155 aa).

4 helical membrane passes run Leu-25–Thr-45, Ile-50–Ser-70, Gly-91–Phe-111, and Trp-118–Phe-138.

This sequence belongs to the major facilitator superfamily. CAR1 family.

The protein resides in the membrane. This is an uncharacterized protein from Schizosaccharomyces pombe (strain 972 / ATCC 24843) (Fission yeast).